Reading from the N-terminus, the 667-residue chain is Beta-galactosidase LacZ (667 aa).

Arg109 lines the substrate pocket. Cys113 contributes to the Zn(2+) binding site. Asn147 contributes to the substrate binding site. Glu148 acts as the Proton donor in catalysis. Zn(2+) contacts are provided by Cys153, Cys155, and Cys158. The active-site Nucleophile is the Glu307. Substrate-binding positions include Trp315 and 355 to 358 (EKFH).

The protein belongs to the glycosyl hydrolase 42 family.

It carries out the reaction Hydrolysis of terminal non-reducing beta-D-galactose residues in beta-D-galactosides.. In terms of biological role, catalyzes the hydrolysis of lactose to its constituent monosaccharides glucose and galactose. This Lactobacillus acidophilus (strain ATCC 700396 / NCK56 / N2 / NCFM) protein is Beta-galactosidase LacZ.